The chain runs to 85 residues: uncharacterized protein (85 aa).

Belongs to the ycf76 family.

The protein resides in the plastid. It localises to the chloroplast. This is an uncharacterized protein from Saccharum hybrid (Sugarcane).